A 269-amino-acid chain; its full sequence is Polyamine aminopropyltransferase (269 aa).

In terms of domain architecture, PABS spans 1–226 (MVWFFEYYDG…ALWSFIIGGE (226 aa)). Gln28 serves as a coordination point for S-methyl-5'-thioadenosine. Residues His59 and Asp83 each contribute to the spermidine site. S-methyl-5'-thioadenosine-binding positions include Asp102 and 133-134 (DG). Asp150 serves as the catalytic Proton acceptor. A spermidine-binding site is contributed by 150 to 153 (DSTD).

This sequence belongs to the spermidine/spermine synthase family. In terms of assembly, homodimer or homotetramer.

It localises to the cytoplasm. It catalyses the reaction S-adenosyl 3-(methylsulfanyl)propylamine + putrescine = S-methyl-5'-thioadenosine + spermidine + H(+). The protein operates within amine and polyamine biosynthesis; spermidine biosynthesis; spermidine from putrescine: step 1/1. Functionally, catalyzes the irreversible transfer of a propylamine group from the amino donor S-adenosylmethioninamine (decarboxy-AdoMet) to putrescine (1,4-diaminobutane) to yield spermidine. This is Polyamine aminopropyltransferase from Archaeoglobus fulgidus (strain ATCC 49558 / DSM 4304 / JCM 9628 / NBRC 100126 / VC-16).